The following is a 301-amino-acid chain: Probable porphobilinogen deaminase (301 aa).

Position 241 is an S-(dipyrrolylmethanemethyl)cysteine (Cys-241).

It belongs to the HMBS family. Requires dipyrromethane as cofactor.

The enzyme catalyses 4 porphobilinogen + H2O = hydroxymethylbilane + 4 NH4(+). The protein operates within porphyrin-containing compound metabolism; protoporphyrin-IX biosynthesis; coproporphyrinogen-III from 5-aminolevulinate: step 2/4. In terms of biological role, tetrapolymerization of the monopyrrole PBG into the hydroxymethylbilane pre-uroporphyrinogen in several discrete steps. This is Probable porphobilinogen deaminase from Pyrobaculum islandicum (strain DSM 4184 / JCM 9189 / GEO3).